The primary structure comprises 149 residues: SsrA-binding protein (149 aa).

Belongs to the SmpB family.

It is found in the cytoplasm. Functionally, required for rescue of stalled ribosomes mediated by trans-translation. Binds to transfer-messenger RNA (tmRNA), required for stable association of tmRNA with ribosomes. tmRNA and SmpB together mimic tRNA shape, replacing the anticodon stem-loop with SmpB. tmRNA is encoded by the ssrA gene; the 2 termini fold to resemble tRNA(Ala) and it encodes a 'tag peptide', a short internal open reading frame. During trans-translation Ala-aminoacylated tmRNA acts like a tRNA, entering the A-site of stalled ribosomes, displacing the stalled mRNA. The ribosome then switches to translate the ORF on the tmRNA; the nascent peptide is terminated with the 'tag peptide' encoded by the tmRNA and targeted for degradation. The ribosome is freed to recommence translation, which seems to be the essential function of trans-translation. The sequence is that of SsrA-binding protein from Wolbachia sp. subsp. Brugia malayi (strain TRS).